Here is a 129-residue protein sequence, read N- to C-terminus: NHP2-like protein 1 homolog (129 aa).

This sequence belongs to the eukaryotic ribosomal protein eL8 family.

The protein localises to the nucleus. It is found in the nucleolus. Its function is as follows. Binds to the 5'-stem-loop of U4 snRNA and may play a role in the late stage of spliceosome assembly. The protein undergoes a conformational change upon RNA-binding. The chain is NHP2-like protein 1 homolog from Dictyostelium discoideum (Social amoeba).